The chain runs to 125 residues: UPF0325 protein Ping_0715 (125 aa).

This sequence belongs to the UPF0325 family.

The chain is UPF0325 protein Ping_0715 from Psychromonas ingrahamii (strain DSM 17664 / CCUG 51855 / 37).